The following is a 414-amino-acid chain: Putative MSV199 domain-containing protein 148R (414 aa).

A coiled-coil region spans residues 209–293 (DKMQISSLET…DSVVEKLGIA (85 aa)).

This is Putative MSV199 domain-containing protein 148R from Acheta domesticus (House cricket).